Here is a 963-residue protein sequence, read N- to C-terminus: Adhesion G protein-coupled receptor D2 (963 aa).

At Met1–Ser662 the chain is on the extracellular side. A disordered region spans residues Asp18–Gly38. The 210-residue stretch at Thr116–Cys325 folds into the Pentraxin (PTX) domain. Cys146 and Cys212 are oxidised to a cystine. Asn271 is a glycosylation site (N-linked (GlcNAc...) asparagine). The GAIN-B domain maps to Met489 to Gln649. The interval Pro599 to Gln649 is GPS. Cys619 and Cys633 are joined by a disulfide. Residue Asn634 is glycosylated (N-linked (GlcNAc...) asparagine). Residues Phe663–Ala683 traverse the membrane as a helical segment. Over Gly684–Thr691 the chain is Cytoplasmic. Residues Thr692–Glu712 traverse the membrane as a helical segment. Over Trp713–Ala720 the chain is Extracellular. Residues Cys721–Val741 form a helical membrane-spanning segment. At Glu742–Arg762 the chain is on the cytoplasmic side. The helical transmembrane segment at Leu763 to Leu783 threads the bilayer. At Pro784–Asn800 the chain is on the extracellular side. The chain crosses the membrane as a helical span at residues Ala801–Ala821. Residues Arg822–Lys857 lie on the Cytoplasmic side of the membrane. A helical membrane pass occupies residues Pro858 to Leu878. Residues Ser879–Pro880 lie on the Extracellular side of the membrane. A helical membrane pass occupies residues Ala881–Tyr901. Residues Ala902–Ala963 are Cytoplasmic-facing.

It belongs to the G-protein coupled receptor 2 family. Adhesion G-protein coupled receptor (ADGR) subfamily.

Its subcellular location is the membrane. In terms of biological role, orphan receptor. This is Adhesion G protein-coupled receptor D2 (ADGRD2) from Homo sapiens (Human).